A 420-amino-acid polypeptide reads, in one-letter code: ATP phosphoribosyltransferase regulatory subunit (420 aa).

The protein belongs to the class-II aminoacyl-tRNA synthetase family. HisZ subfamily. Heteromultimer composed of HisG and HisZ subunits.

The protein localises to the cytoplasm. Its pathway is amino-acid biosynthesis; L-histidine biosynthesis; L-histidine from 5-phospho-alpha-D-ribose 1-diphosphate: step 1/9. Functionally, required for the first step of histidine biosynthesis. May allow the feedback regulation of ATP phosphoribosyltransferase activity by histidine. The chain is ATP phosphoribosyltransferase regulatory subunit from Bacillus thuringiensis (strain Al Hakam).